The primary structure comprises 101 residues: uncharacterized protein (101 aa).

This is an uncharacterized protein from Enterobacteria phage T3 (Bacteriophage T3).